Reading from the N-terminus, the 429-residue chain is D-inositol 3-phosphate glycosyltransferase (429 aa).

Residue H20 participates in 1D-myo-inositol 3-phosphate binding. Residues 26–27 and G34 contribute to the UDP-N-acetyl-alpha-D-glucosamine site; that span reads QP. Residues 31–36, K89, Y122, T146, and R166 each bind 1D-myo-inositol 3-phosphate; that span reads DAGGMN. The UDP-N-acetyl-alpha-D-glucosamine site is built by R240, K245, and Q306. Mg(2+) contacts are provided by Y315, R316, and A318. E328 and E336 together coordinate UDP-N-acetyl-alpha-D-glucosamine. Mg(2+) is bound at residue T342.

It belongs to the glycosyltransferase group 1 family. MshA subfamily. As to quaternary structure, homodimer.

The enzyme catalyses 1D-myo-inositol 3-phosphate + UDP-N-acetyl-alpha-D-glucosamine = 1D-myo-inositol 2-acetamido-2-deoxy-alpha-D-glucopyranoside 3-phosphate + UDP + H(+). In terms of biological role, catalyzes the transfer of a N-acetyl-glucosamine moiety to 1D-myo-inositol 3-phosphate to produce 1D-myo-inositol 2-acetamido-2-deoxy-glucopyranoside 3-phosphate in the mycothiol biosynthesis pathway. The protein is D-inositol 3-phosphate glycosyltransferase of Nocardiopsis dassonvillei (strain ATCC 23218 / DSM 43111 / CIP 107115 / JCM 7437 / KCTC 9190 / NBRC 14626 / NCTC 10488 / NRRL B-5397 / IMRU 509) (Actinomadura dassonvillei).